We begin with the raw amino-acid sequence, 1792 residues long: Eukaryotic translation initiation factor 4G (1792 aa).

Basic and acidic residues predominate over residues 1–12; sequence MSQRGDRGEGHA. Disordered stretches follow at residues 1-285, 424-446, 491-590, 612-659, 678-761, 874-912, 960-993, 999-1018, 1275-1299, 1407-1503, and 1537-1600; these read MSQR…PRPP, DSSG…TYGS, SPSM…PTPV, NSVP…EDLK, GVNK…NESH, VASE…EITR, SSSI…LDDW, MSTP…EANG, GERE…EERE, WQQR…HRTT, and ELSS…KLYS. The span at 21–42 shows a compositional bias: gly residues; the sequence is FGGGHRGGGGVGGAGKGGGGSS. Residues 88 to 107 are compositionally biased toward pro residues; it reads PLRPPAPQNAPAHVPVPAPR. Composition is skewed to polar residues over residues 147–156 and 179–191; these read RISSTSTSQG and STMQ…SSAP. Low complexity-rich tracts occupy residues 216-243, 263-278, and 432-442; these read PQAP…PLQQ, PSQV…SVPN, and PSVQQQSQPVS. Residues 491 to 517 are compositionally biased toward polar residues; it reads SPSMNTGPGSNKDNLAGSTTSGHSQVT. Composition is skewed to basic and acidic residues over residues 545–564, 571–587, and 633–643; these read DVNK…KDNE, KSGE…EKHP, and DSNKNATKDTR. The segment covering 644–654 has biased composition (polar residues); the sequence is NLSQEPQSASS. Residues 699–718 are compositionally biased toward low complexity; it reads AADASSIDRSSARSTSESTE. The segment covering 964 to 990 has biased composition (basic and acidic residues); that stretch reads ADHELPDESSEKEVNMGEDEGKKKVEL. Residues 1018 to 1030 are EIF4E-binding; sequence GRKRYSRDFLLTL. The 224-residue stretch at 1183–1406 folds into the MIF4G domain; that stretch reads QRQLKAILNK…RDSIDLRKNK (224 aa). Positions 1278–1289 are enriched in acidic residues; sequence EEAEADKTEEEG. Basic and acidic residues-rich tracts occupy residues 1290–1299 and 1411–1432; these read EIKQTKEERE and RKVE…ERHA. 2 stretches are compositionally biased toward low complexity: residues 1439–1450 and 1461–1470; these read RGSVVGSGPRRG and SAAALASPSS. 2 stretches are compositionally biased toward basic and acidic residues: residues 1490-1503 and 1559-1572; these read IRFE…HRTT and AREE…DRSG. A compositionally biased stretch (polar residues) spans 1576–1593; the sequence is PNTQFAGPSNRPASQEGR. The 125-residue stretch at 1603–1727 folds into the MI domain; the sequence is DLREKSISAI…SLQEVGTLIE (125 aa).

Belongs to the eukaryotic initiation factor 4G family. EIF4F is a multi-subunit complex, the composition of which varies with external and internal environmental conditions. It is composed of at least EIF4A, EIF4E and EIF4G. In higher plants two isoforms of EIF4F have been identified, named isoform EIF4F and isoform EIF(iso)4F. Isoform EIF4F has subunits p220 and p26, whereas isoform EIF(iso)4F has subunits p82 and p28.

Functionally, component of the protein complex eIF4F, which is involved in the recognition of the mRNA cap, ATP-dependent unwinding of 5'-terminal secondary structure and recruitment of mRNA to the ribosome. This chain is Eukaryotic translation initiation factor 4G, found in Oryza sativa subsp. japonica (Rice).